We begin with the raw amino-acid sequence, 2057 residues long: Fer-1-like protein 5 (2057 aa).

7 consecutive C2 domains span residues 1–99, 152–265, 308–425, 1057–1188, 1213–1346, 1467–1587, and 1705–1853; these read MLRL…VLFV, PGST…TLLR, DDTD…EGVY, DTRP…MRWH, KLGE…AQDY, PKPP…AHCG, and GPPG…KQCS. The Ca(2+) site is built by D1502, D1508, D1557, F1558, D1559, S1562, D1565, D1824, S1827, and D1830. Residues 1962-1982 traverse the membrane as a helical segment; that stretch reads LIAFMVISIIALMLFNFIYSA.

This sequence belongs to the ferlin family. Interacts (via second C2 domain) with EHD1 and EHD2. Ca(2+) serves as cofactor.

The protein localises to the cell membrane. It localises to the membrane. Functionally, plays a role in myoblast fusion; probable mediator of endocytic recycling for membrane trafficking events during myotube formation. This is Fer-1-like protein 5 (FER1L5) from Homo sapiens (Human).